A 376-amino-acid polypeptide reads, in one-letter code: Carbamoyl phosphate synthase small chain (376 aa).

Residues Met-1–Phe-183 form a CPSase region. L-glutamine contacts are provided by Ser-46, Gly-232, and Gly-234. Residues Thr-184 to Arg-376 form the Glutamine amidotransferase type-1 domain. The active-site Nucleophile is Cys-260. 5 residues coordinate L-glutamine: Phe-261, Gln-264, Asn-302, Gly-304, and Phe-305. Catalysis depends on residues His-350 and Glu-352.

The protein belongs to the CarA family. In terms of assembly, composed of two chains; the small (or glutamine) chain promotes the hydrolysis of glutamine to ammonia, which is used by the large (or ammonia) chain to synthesize carbamoyl phosphate. Tetramer of heterodimers (alpha,beta)4.

It catalyses the reaction hydrogencarbonate + L-glutamine + 2 ATP + H2O = carbamoyl phosphate + L-glutamate + 2 ADP + phosphate + 2 H(+). The enzyme catalyses L-glutamine + H2O = L-glutamate + NH4(+). It functions in the pathway amino-acid biosynthesis; L-arginine biosynthesis; carbamoyl phosphate from bicarbonate: step 1/1. The protein operates within pyrimidine metabolism; UMP biosynthesis via de novo pathway; (S)-dihydroorotate from bicarbonate: step 1/3. Functionally, small subunit of the glutamine-dependent carbamoyl phosphate synthetase (CPSase). CPSase catalyzes the formation of carbamoyl phosphate from the ammonia moiety of glutamine, carbonate, and phosphate donated by ATP, constituting the first step of 2 biosynthetic pathways, one leading to arginine and/or urea and the other to pyrimidine nucleotides. The small subunit (glutamine amidotransferase) binds and cleaves glutamine to supply the large subunit with the substrate ammonia. The sequence is that of Carbamoyl phosphate synthase small chain from Mycobacterium bovis (strain ATCC BAA-935 / AF2122/97).